The chain runs to 160 residues: Phosphopantetheine adenylyltransferase (160 aa).

Thr9 is a binding site for substrate. ATP-binding positions include 9 to 10 (TF) and His17. Substrate is bound by residues Lys41, Leu73, and Arg87. ATP-binding positions include 88 to 90 (GLR), Glu98, and 123 to 129 (YMFISAS).

It belongs to the bacterial CoaD family. As to quaternary structure, homohexamer. Mg(2+) serves as cofactor.

The protein resides in the cytoplasm. The enzyme catalyses (R)-4'-phosphopantetheine + ATP + H(+) = 3'-dephospho-CoA + diphosphate. The protein operates within cofactor biosynthesis; coenzyme A biosynthesis; CoA from (R)-pantothenate: step 4/5. In terms of biological role, reversibly transfers an adenylyl group from ATP to 4'-phosphopantetheine, yielding dephospho-CoA (dPCoA) and pyrophosphate. The polypeptide is Phosphopantetheine adenylyltransferase (Thiobacillus denitrificans (strain ATCC 25259 / T1)).